Here is a 440-residue protein sequence, read N- to C-terminus: Chitinase-like protein Idgf5 (440 aa).

An N-terminal signal peptide occupies residues 1 to 27; sequence MRNKMIYFNFHLFVIIFANLQIFQVQA. The GH18 domain maps to 28–439; it reads ANIFCYYDTQ…KSIHNAFKKF (412 aa). A disulfide bond links cysteine 32 and cysteine 56. Asparagine 126, asparagine 283, and asparagine 403 each carry an N-linked (GlcNAc...) asparagine glycan. Residues cysteine 340 and cysteine 421 are joined by a disulfide bond.

Belongs to the glycosyl hydrolase 18 family. IDGF subfamily. Glycosylated.

Its subcellular location is the secreted. Cooperates with insulin-like peptides to stimulate the proliferation, polarization and motility of imaginal disk cells. May act by stabilizing the binding of insulin-like peptides to its receptor through a simultaneous interaction with both molecules to form a multiprotein signaling complex. In Glossina morsitans morsitans (Savannah tsetse fly), this protein is Chitinase-like protein Idgf5 (Idgf5).